Reading from the N-terminus, the 311-residue chain is MECKRARAYSSSANLGSGFDILSMAHTAFFDTVEICVETKNSENIVIESNSKIPLEPNRNSATYPLVRIMEERGIKASLRVKVIKGIPEGLGLGSSGASATAAVMAFSSLFNLNLSKEDLVRYAMYGEIASSGSPHPDNVAASVFGGVVSVVSVNPVKVVEIPLNYSFNILLFVPLNIHIEEKTKKAREMVPKTVKLSDYINNSRYISSLLIGFVKGERDLIRLGLNDEIVEKARLPLFPYYPKIKEIAIKYDAVGSCVSGAGPSILVLTDKMTDENKIAEEGTKTCNEFNVECEVIKAKIAGGVEVERRN.

88–98 (PEGLGLGSSGA) contacts ATP.

Belongs to the GHMP kinase family. Homoserine kinase subfamily.

The protein resides in the cytoplasm. The catalysed reaction is L-homoserine + ATP = O-phospho-L-homoserine + ADP + H(+). It participates in amino-acid biosynthesis; L-threonine biosynthesis; L-threonine from L-aspartate: step 4/5. Its function is as follows. Catalyzes the ATP-dependent phosphorylation of L-homoserine to L-homoserine phosphate. This Saccharolobus islandicus (strain Y.N.15.51 / Yellowstone #2) (Sulfolobus islandicus) protein is Homoserine kinase.